The primary structure comprises 252 residues: Sulfoacetaldehyde reductase 2 (252 aa).

6–30 is a binding site for NADP(+); the sequence is LITGATSGFGRAAARRFADAGWSLI. Residue serine 139 coordinates substrate. The active-site Proton acceptor is tyrosine 152.

Belongs to the short-chain dehydrogenases/reductases (SDR) family. Homodimer and heterotetramer.

The catalysed reaction is 2-hydroxyethane-1-sulfonate + NADP(+) = sulfoacetaldehyde + NADPH + H(+). It functions in the pathway organosulfur degradation. Catalyzes the formation of isethionate from 2-sulfoacetaldehyde in the deaminative pathway of taurine. Constitutively expressed enzyme that only mediates a small part of the activity observed in taurine-grown cells. The chain is Sulfoacetaldehyde reductase 2 (isfD2) from Chromohalobacter salexigens (strain ATCC BAA-138 / DSM 3043 / CIP 106854 / NCIMB 13768 / 1H11).